A 303-amino-acid chain; its full sequence is MADAASQVLLGSGLTILSQPLMYVKVLIQVGYEPLAPTVGRNIFGRQVCQLPGLFCYAQHIASIDGKRGLFTGLTPRLCSGVLGTVVHGKVLQHYQECDKAEESGSGNVQKEVSSSFDRVIKETTREMMARSAATLITHPFHVITLRSMVQFIGRESKYCGLCDSIATIYREEGILGFFAGLIPRLLGDIISLWLCNSLAYLVNTYALDSGVSTMNEMKSYSQAVTGFFASMLTYPFVLVSNLMAVNNCGLAGGCPPYAPIYSSWIDCWCMLQKEGNMSRGNSLFFRKVPFGKTYCCDLRMLI.

Position 2 is an N-acetylalanine (Ala2). Residues Ala2–Thr15 lie on the Mitochondrial intermembrane side of the membrane. Solcar repeat units follow at residues Ala2 to Cys98 and Asp118 to Tyr206. The chain crosses the membrane as a helical span at residues Ile16–Ala36. Topologically, residues Pro37–Arg77 are cytoplasmic. The helical transmembrane segment at Leu78–Leu92 threads the bilayer. Residues Gln93 to Thr135 are Mitochondrial intermembrane-facing. Residues Leu136–Glu156 form a helical membrane-spanning segment. At Ser157–Ala180 the chain is on the cytoplasmic side. The helical transmembrane segment at Gly181 to Leu199 threads the bilayer. At Ala200–Ser231 the chain is on the mitochondrial intermembrane side. The helical transmembrane segment at Met232 to Ala252 threads the bilayer. The Cytoplasmic portion of the chain corresponds to Gly253–Arg280. The helical transmembrane segment at Gly281–Ile303 threads the bilayer.

This sequence belongs to the mitochondrial carrier (TC 2.A.29) family. As to quaternary structure, interacts with p15BID.

It is found in the mitochondrion outer membrane. Its function is as follows. Protein insertase that mediates insertion of transmembrane proteins into the mitochondrial outer membrane. Catalyzes insertion of proteins with alpha-helical transmembrane regions, such as signal-anchored, tail-anchored and multi-pass membrane proteins. Does not mediate insertion of beta-barrel transmembrane proteins. Also acts as a receptor for the truncated form of pro-apoptotic BH3-interacting domain death agonist (p15 BID) and has therefore a critical function in apoptosis. Regulates the quiescence/cycling of hematopoietic stem cells (HSCs). Acts as a regulator of mitochondrial fusion, essential for the naive-to-primed interconversion of embryonic stem cells (ESCs). Acts as a regulator of lipid homeostasis and has a regulatory role in adipocyte differentiation and biology. This chain is Mitochondrial carrier homolog 2 (MTCH2), found in Bos taurus (Bovine).